We begin with the raw amino-acid sequence, 629 residues long: tRNA uridine 5-carboxymethylaminomethyl modification enzyme MnmG (629 aa).

FAD contacts are provided by residues 13–18 (GGGHAG), Val125, and Ser180. Residue 273–287 (GPRYCPSIEDKVMRF) participates in NAD(+) binding. Gln370 lines the FAD pocket.

Belongs to the MnmG family. As to quaternary structure, homodimer. Heterotetramer of two MnmE and two MnmG subunits. It depends on FAD as a cofactor.

It localises to the cytoplasm. NAD-binding protein involved in the addition of a carboxymethylaminomethyl (cmnm) group at the wobble position (U34) of certain tRNAs, forming tRNA-cmnm(5)s(2)U34. The polypeptide is tRNA uridine 5-carboxymethylaminomethyl modification enzyme MnmG (Escherichia coli O127:H6 (strain E2348/69 / EPEC)).